We begin with the raw amino-acid sequence, 426 residues long: Diaminobutyrate--2-oxoglutarate transaminase (426 aa).

Position 272 is an N6-(pyridoxal phosphate)lysine (lysine 272).

The protein belongs to the class-III pyridoxal-phosphate-dependent aminotransferase family. Pyridoxal 5'-phosphate serves as cofactor.

It carries out the reaction L-2,4-diaminobutanoate + 2-oxoglutarate = L-aspartate 4-semialdehyde + L-glutamate. The protein operates within amine and polyamine biosynthesis; ectoine biosynthesis; L-ectoine from L-aspartate 4-semialdehyde: step 1/3. Its function is as follows. Catalyzes reversively the conversion of L-aspartate beta-semialdehyde (ASA) to L-2,4-diaminobutyrate (DABA) by transamination with L-glutamate. In Sporosarcina pasteurii (Bacillus pasteurii), this protein is Diaminobutyrate--2-oxoglutarate transaminase (ectB).